Reading from the N-terminus, the 62-residue chain is Endoregulin (62 aa).

Residues 25–45 (LAVIILFITAVLLLILFAIVF) traverse the membrane as a helical segment.

As to quaternary structure, homooligomer. Can also form heterooligomers with other sarcoplasmic/endoplasmic reticulum calcium ATPase (SERCA) regulators ARLN, PLN, SLN and STRIT1/DWORF. Monomer. Interacts as a monomer with ATP2A2/SERCA2; the interaction results in inhibition of ATP2A2 Ca(2+) affinity.

It is found in the endoplasmic reticulum membrane. Functionally, inhibits the activity of the calcium ATPases ATP2A2/SERCA2 and ATP2A3/SERCA3 by decreasing their apparent affinity for Ca(2+). The sequence is that of Endoregulin from Homo sapiens (Human).